Consider the following 579-residue polypeptide: MFS-type transporter sphD (579 aa).

A disordered region spans residues 17–62 (SAFAVRAEPDSEPVSEKQGTAETDAETGAGGTEVPAERNGEDDVER). Residues 51–62 (PAERNGEDDVER) are compositionally biased toward basic and acidic residues. 8 helical membrane passes run 73–93 (AFIGLAASMFVFQVDATALGI), 110–130 (FWANLSYTLCGLVMQPVWASI), 138–158 (PPLYVSMALFFIGSIVFAVAQ), 168–188 (VLQGFGGGGIDVLAEVILADM), 200–220 (LMAIPMAIGNIMGPSVGALFA), 227–247 (WIGWVNLPLLGIGTPLVFFFL), 267–287 (WIGMVLVVVGITIFVLPLSWA), and 294–314 (GAWQTLVPLFLGVAVLVIFAF). N-linked (GlcNAc...) asparagine glycosylation occurs at asparagine 335. A run of 6 helical transmembrane segments spans residues 338 to 358 (LVGGFLHGAVLVSLLQYLPLI), 367 to 391 (AILSAVSLLPTVIISVVVAAISMML), 398 to 419 (YVWILRLAWVILTLGTGLLALF), 429 to 449 (LGLPILWGAGVALLRLNLLPM), 460 to 480 (GLAIGQFLTIRMFGGLVGLTI), and 541 to 561 (FQTIFYTMTGLSGLGLVTSLF).

This sequence belongs to the major facilitator superfamily.

It localises to the membrane. In terms of biological role, MFS-type transporter; part of the gene cluster that mediates the biosynthesis of sphingofungins, bioactive molecules acting as sphingolipid inhibitors via inhibiting serine palmitoyl transferase (SPT). The polypeptide is MFS-type transporter sphD (Aspergillus fumigatus (strain CBS 144.89 / FGSC A1163 / CEA10) (Neosartorya fumigata)).